The following is a 330-amino-acid chain: Aspartate--ammonia ligase (330 aa).

It belongs to the class-II aminoacyl-tRNA synthetase family. AsnA subfamily.

It localises to the cytoplasm. The catalysed reaction is L-aspartate + NH4(+) + ATP = L-asparagine + AMP + diphosphate + H(+). Its pathway is amino-acid biosynthesis; L-asparagine biosynthesis; L-asparagine from L-aspartate (ammonia route): step 1/1. This chain is Aspartate--ammonia ligase, found in Streptococcus pneumoniae serotype 2 (strain D39 / NCTC 7466).